Reading from the N-terminus, the 442-residue chain is Elongation factor 1-gamma (442 aa).

Residues 2 to 87 enclose the GST N-terminal domain; sequence AAGTLYTYPE…YLSNDVLRGS (86 aa). In terms of domain architecture, GST C-terminal spans 88 to 216; sequence TPQASAQVLQ…VKLCEKMAQF (129 aa). 2 stretches are compositionally biased toward basic and acidic residues: residues 227–242 and 249–263; these read KKEA…KEGG and QEKK…KAAP. The segment at 227-273 is disordered; the sequence is KKEAPIKKEKGGKEGGKQQPQQQEKKEKKKEEKKAAPAEEEMDECEA. The EF-1-gamma C-terminal domain maps to 281–442; it reads AKDPFAHLPK…KPFNQGKIFK (162 aa).

In terms of assembly, EF-1 is composed of four subunits: alpha, beta, delta, and gamma.

Probably plays a role in anchoring the complex to other cellular components. The polypeptide is Elongation factor 1-gamma (eef1g) (Danio rerio (Zebrafish)).